A 132-amino-acid chain; its full sequence is Protein MrkF (132 aa).

It localises to the fimbrium. Appears to affect the stability of the intact fimbriae on the cell surface. This is Protein MrkF (mrkF) from Klebsiella pneumoniae.